The primary structure comprises 236 residues: Flagellar L-ring protein (236 aa).

The first 16 residues, 1-16, serve as a signal peptide directing secretion; the sequence is MRMRITAILAAGLLAG. The N-palmitoyl cysteine moiety is linked to residue Cys-17. Cys-17 carries the S-diacylglycerol cysteine lipid modification. The interval 96–143 is disordered; that stretch reads ENETDRSRKNSSGFNLGASGESQTSDFAWSGDLEYGSNTKTEGDGKTE. The span at 105-122 shows a compositional bias: polar residues; that stretch reads NSSGFNLGASGESQTSDF.

This sequence belongs to the FlgH family. As to quaternary structure, the basal body constitutes a major portion of the flagellar organelle and consists of four rings (L,P,S, and M) mounted on a central rod.

The protein resides in the cell outer membrane. It localises to the bacterial flagellum basal body. Its function is as follows. Assembles around the rod to form the L-ring and probably protects the motor/basal body from shearing forces during rotation. The protein is Flagellar L-ring protein of Sinorhizobium medicae (strain WSM419) (Ensifer medicae).